The sequence spans 172 residues: Transcriptional repressor NrdR (172 aa).

A zinc finger lies at 3–34 (CPFCRHPDSRVVDSRTTDDGTSIRRRRQCPDC). Residues 46-136 (LMVIKRSGVT…VYRAFDSLED (91 aa)) enclose the ATP-cone domain. The segment at 152–172 (ERSGGGTCGTGTVPVPAGTAD) is disordered. The span at 161–172 (TGTVPVPAGTAD) shows a compositional bias: low complexity.

The protein belongs to the NrdR family. Requires Zn(2+) as cofactor.

Its function is as follows. Negatively regulates transcription of bacterial ribonucleotide reductase nrd genes and operons by binding to NrdR-boxes. The chain is Transcriptional repressor NrdR from Streptomyces clavuligerus.